The primary structure comprises 231 residues: Eukaryotic translation initiation factor 4E-1 (231 aa).

Residues 1-55 (MVVEDTQKSSITDDQITANPNNENEDLEEGEILDDDDSSATSRPPSSSGALARNP) are disordered. Residues 8–18 (KSSITDDQITA) show a composition bias toward polar residues. Positions 23-38 (ENEDLEEGEILDDDDS) are enriched in acidic residues. The segment covering 39-48 (SATSRPPSSS) has biased composition (low complexity). EIF4G-binding stretches follow at residues 56 to 59 (HPLE) and 66 to 102 (FDNP…NNIH). MRNA is bound by residues 74-79 (KQAAWG), K106, and 124-125 (WE). A disulfide bridge connects residues C129 and C167. Positions 150–159 (YTLLGMIGEQ) are EIF4G-binding. MRNA-binding positions include 174–179 (RNRQEK) and 219–223 (KKHDR).

This sequence belongs to the eukaryotic initiation factor 4E family. As to quaternary structure, EIF4F is a multi-subunit complex, the composition of which varies with external and internal environmental conditions. It is composed of at least EIF4A, EIF4E and EIF4G. EIF4E is also known to interact with other partners. In higher plants two isoforms of EIF4F have been identified, named isoform EIF4F and isoform EIF(iso)4F. Isoform EIF4F has subunits p220 and p26, whereas isoform EIF(iso)4F has subunits p82 and p28. (Microbial infection) Interacts with potyvirus peanut stripe virus (PStV) helper component proteinase (HC-Pro) in the cytoplasm and with PStV viral genome-linked protein (VPg) in the nucleus; these interactions are possible in susceptible hosts but impaired in resistant plants. Post-translationally, according to the redox status, the Cys-129-Cys-167 disulfide bridge may have a role in regulating protein function by affecting its ability to bind capped mRNA. In terms of tissue distribution, expressed ubiquitously with highest levels in young leaves and roots, and lowest levels in flowers.

It is found in the nucleus. The protein localises to the cytoplasm. Its function is as follows. Component of the protein complex eIF4F, which is involved in the recognition of the mRNA cap, ATP-dependent unwinding of 5'-terminal secondary structure and recruitment of mRNA to the ribosome. Recognizes and binds the 7-methylguanosine-containing mRNA cap during an early step in the initiation of protein synthesis and facilitates ribosome binding by inducing the unwinding of the mRNAs secondary structures. Key component of recessive resistance to potyviruses such as peanut stripe virus (PStV). Functionally, (Microbial infection) Susceptibility host factor required for viral infection by recruiting viral RNAs to the host ribosomal complex via an interaction with viral genome-linked protein (VPg). This Arachis hypogaea (Peanut) protein is Eukaryotic translation initiation factor 4E-1.